The sequence spans 1083 residues: Error-prone DNA polymerase (1083 aa).

Belongs to the DNA polymerase type-C family. DnaE2 subfamily.

Its subcellular location is the cytoplasm. It catalyses the reaction DNA(n) + a 2'-deoxyribonucleoside 5'-triphosphate = DNA(n+1) + diphosphate. DNA polymerase involved in damage-induced mutagenesis and translesion synthesis (TLS). It is not the major replicative DNA polymerase. The chain is Error-prone DNA polymerase from Xanthomonas oryzae pv. oryzae (strain KACC10331 / KXO85).